The sequence spans 150 residues: UPF0506 protein SJCHGC09643 (150 aa).

The first 18 residues, 1-18 (MNTCIQLLILCLVTVINS), serve as a signal peptide directing secretion. Residues Asn20, Asn32, Asn48, and Asn110 are each glycosylated (N-linked (GlcNAc...) asparagine). Cystine bridges form between Cys116–Cys130, Cys123–Cys134, and Cys129–Cys139.

It belongs to the UPF0506 family.

It is found in the secreted. In Schistosoma japonicum (Blood fluke), this protein is UPF0506 protein SJCHGC09643.